The primary structure comprises 901 residues: MTTQLNINSVIENAKRVITPLSPISIFAARNPWEGLEADTFEDVAKWLRDVRDVDIFPNKALIESAVARGELDESVFNQLVTDMLLEHHYNIPQHYINLYIDNIKTLKDVPASYMNHSNVDVVADLLLEKSKRDMADSYHHYDVRPMSDAIIDEQGEPLSEQVNRQMIKWTKLYIDQFLSSWTMPKREQSFYHAWLHLAQHDHSFTKAQRQVIKGLPNDPKMTIESVLTHFSIDQEDYQAYVEGHLLALPGWAGMLYYRSQQHHFEQHLLTDYLAIRLVVEQLLVGDEFKSVTKDCESRSENWFKQTVASWCYYSDMPSDVLLQHDVNEIQTFIHFAATMNKNVFKNLWLIAWEMTYESQLKQKIKAGHESVAGALDVNQVNVSENDNANQPHSVLLNDTQAVDENNSELNQVGTSTKAQIAFCIDVRSEPFRRHIEAAGPFETIGIAGFFGLPIQKDAVDEQFKHDSLPVMVPPAYRIKEFADRYDMNVYRQQQQTMSSMFYTFKLMKNNVMPSLLLPELSGPFLSLSTIVNSIMPRKSRASLQKITQKWLKKPETKLTIDREFDRTSDLPVGFTEQEQIDFALQALKLMDLTEAFAPFVVLAGHASHSHNNPHHASLECGACGGASSGFNAKLLAMICNRPNVRQGLKQSGVYIPETTVFAAAEHHTSTDTLAWVYVPDTLSSIALDAYESLNDAMPMISEHANRERLDKLPTIGRVNHPVEEAQRFASDWSEVRPEWGLAKNASFIIGRRQLTKGIDLEGRTFLHNYDWRKDKDGKLLNTIISGPALVAQWINLQYYASTVAPHFYGSGNKATQTVTSGVGVMQGNASDLMYGLSWQSVMAADRTMYHSPIRLLVVVQAPDYVVARLLANNDHFARKVSNHWLRLMSVNEEGRFKSWI.

Positions 424, 426, 606, and 621 each coordinate Zn(2+).

Belongs to the inorganic carbon transporter (TC 9.A.2) DabA family. As to quaternary structure, forms a complex with DabB. Zn(2+) serves as cofactor.

The protein resides in the cell membrane. Functionally, part of an energy-coupled inorganic carbon pump. This chain is Probable inorganic carbon transporter subunit DabA, found in Staphylococcus aureus (strain MSSA476).